A 411-amino-acid polypeptide reads, in one-letter code: Ferrochelatase, mitochondrial (411 aa).

The transit peptide at M1–S41 directs the protein to the mitochondrion. Residues V34 to K55 form a disordered region. Basic and acidic residues predominate over residues S41–K51. Protoporphyrin IX contacts are provided by R102, Y110, and S117. C183 is a [2Fe-2S] cluster binding site. Residues H217 and D370 contribute to the active site. The [2Fe-2S] cluster site is built by C390, C393, and C398.

This sequence belongs to the ferrochelatase family. In terms of assembly, homodimer. Homotetramer. [2Fe-2S] cluster is required as a cofactor.

It is found in the mitochondrion inner membrane. The enzyme catalyses heme b + 2 H(+) = protoporphyrin IX + Fe(2+). Its pathway is porphyrin-containing compound metabolism; protoheme biosynthesis; protoheme from protoporphyrin-IX: step 1/1. In terms of biological role, catalyzes the ferrous insertion into protoporphyrin IX. The protein is Ferrochelatase, mitochondrial of Xenopus laevis (African clawed frog).